We begin with the raw amino-acid sequence, 233 residues long: Coenzyme Q-binding protein COQ10 homolog, mitochondrial (233 aa).

A mitochondrion-targeting transit peptide spans 1 to 34; that stretch reads MAEKATSLFLRAMEISEKQSFDVMRRNSSCTIRH.

This sequence belongs to the COQ10 family. In terms of assembly, interacts with coenzyme Q.

Its subcellular location is the mitochondrion inner membrane. In terms of biological role, required for the function of coenzyme Q in the respiratory chain. May serve as a chaperone or may be involved in the transport of Q6 from its site of synthesis to the catalytic sites of the respiratory complexes. This is Coenzyme Q-binding protein COQ10 homolog, mitochondrial from Danio rerio (Zebrafish).